Here is a 311-residue protein sequence, read N- to C-terminus: 4-hydroxy-3-methylbut-2-enyl diphosphate reductase (311 aa).

Cysteine 12 contributes to the [4Fe-4S] cluster binding site. (2E)-4-hydroxy-3-methylbut-2-enyl diphosphate-binding residues include histidine 41 and histidine 74. Positions 41 and 74 each coordinate dimethylallyl diphosphate. Histidine 41 and histidine 74 together coordinate isopentenyl diphosphate. Cysteine 96 contacts [4Fe-4S] cluster. Histidine 124 contributes to the (2E)-4-hydroxy-3-methylbut-2-enyl diphosphate binding site. Histidine 124 contributes to the dimethylallyl diphosphate binding site. Histidine 124 provides a ligand contact to isopentenyl diphosphate. Glutamate 126 serves as the catalytic Proton donor. Threonine 168 serves as a coordination point for (2E)-4-hydroxy-3-methylbut-2-enyl diphosphate. Residue cysteine 198 participates in [4Fe-4S] cluster binding. (2E)-4-hydroxy-3-methylbut-2-enyl diphosphate contacts are provided by serine 226, serine 227, asparagine 228, and serine 270. Dimethylallyl diphosphate is bound by residues serine 226, serine 227, asparagine 228, and serine 270. Isopentenyl diphosphate-binding residues include serine 226, serine 227, asparagine 228, and serine 270.

This sequence belongs to the IspH family. [4Fe-4S] cluster is required as a cofactor.

The catalysed reaction is isopentenyl diphosphate + 2 oxidized [2Fe-2S]-[ferredoxin] + H2O = (2E)-4-hydroxy-3-methylbut-2-enyl diphosphate + 2 reduced [2Fe-2S]-[ferredoxin] + 2 H(+). It carries out the reaction dimethylallyl diphosphate + 2 oxidized [2Fe-2S]-[ferredoxin] + H2O = (2E)-4-hydroxy-3-methylbut-2-enyl diphosphate + 2 reduced [2Fe-2S]-[ferredoxin] + 2 H(+). Its pathway is isoprenoid biosynthesis; dimethylallyl diphosphate biosynthesis; dimethylallyl diphosphate from (2E)-4-hydroxy-3-methylbutenyl diphosphate: step 1/1. It functions in the pathway isoprenoid biosynthesis; isopentenyl diphosphate biosynthesis via DXP pathway; isopentenyl diphosphate from 1-deoxy-D-xylulose 5-phosphate: step 6/6. Its function is as follows. Catalyzes the conversion of 1-hydroxy-2-methyl-2-(E)-butenyl 4-diphosphate (HMBPP) into a mixture of isopentenyl diphosphate (IPP) and dimethylallyl diphosphate (DMAPP). Acts in the terminal step of the DOXP/MEP pathway for isoprenoid precursor biosynthesis. The protein is 4-hydroxy-3-methylbut-2-enyl diphosphate reductase of Alcanivorax borkumensis (strain ATCC 700651 / DSM 11573 / NCIMB 13689 / SK2).